A 69-amino-acid polypeptide reads, in one-letter code: Alpha-elapitoxin-Lc2c (69 aa).

4 disulfides stabilise this stretch: Cys3-Cys20, Cys13-Cys41, Cys45-Cys56, and Cys57-Cys62.

This sequence belongs to the three-finger toxin family. Long-chain subfamily. Type II alpha-neurotoxin sub-subfamily. Expressed by the venom gland.

It localises to the secreted. Binds with high affinity to muscular nicotinic acetylcholine receptors (nAChRs), whereas it binds with a low affinity to neuronal alpha-7/CHRNA7 nAChRs. This is Alpha-elapitoxin-Lc2c from Laticauda colubrina (Yellow-lipped sea krait).